We begin with the raw amino-acid sequence, 2601 residues long: Centrosomal protein of 295 kDa (2601 aa).

The tract at residues 1-560 is necessary for centriole targeting and microtubule association; the sequence is MKRKVVNTHK…KKTQPTGVGI (560 aa). Position 14 is a phosphoserine (S14). Coiled-coil stretches lie at residues 207–273 and 500–552; these read KRPD…EDLA and AARI…KRKK. Phosphoserine occurs at positions 654 and 938. Residues 1008-1029 are disordered; that stretch reads PSADTKSGKIQEQHSSKSEKGL. The span at 1013–1027 shows a compositional bias: basic and acidic residues; it reads KSGKIQEQHSSKSEK. 2 coiled-coil regions span residues 1053-1082 and 1498-1544; these read LHDS…VELL and IQSH…VSSE. The tract at residues 1558-1580 is disordered; it reads ADSERTQKSFPTKSNDTLPSSHR. A compositionally biased stretch (polar residues) spans 1565–1577; it reads KSFPTKSNDTLPS. The residue at position 1637 (S1637) is a Phosphoserine. Positions 1728–1758 form a coiled coil; it reads QEKLLVQRQTALQQQIQKHEETLKDFFKDSQ. 3 stretches are compositionally biased toward basic and acidic residues: residues 1795–1827, 1985–2003, and 2100–2112; these read RHAD…DLGR, FSEH…KEEE, and DNRD…DSSS. Disordered stretches follow at residues 1795 to 1834, 1979 to 2004, and 2085 to 2117; these read RHAD…KPPV, LTDP…EEET, and HPDF…SHCA. The residue at position 2473 (T2473) is a Phosphothreonine. Residues 2478–2601 form an ALMS motif region; the sequence is SLQEAFIKRK…LEKLRAKNTC (124 aa). A coiled-coil region spans residues 2556–2581; it reads RLYNQLAEVKQQKEEKTKQEAYAQNR.

In terms of assembly, interacts (via ALMS motif) with microtubules; this interaction is direct.

It localises to the cytoplasm. The protein resides in the cytoskeleton. Its subcellular location is the microtubule organizing center. It is found in the centrosome. The protein localises to the centriole. It localises to the spindle. Centriole-enriched microtubule-binding protein involved in centriole biogenesis. Essential for the generation of the distal portion of new-born centrioles in a CPAP- and CEP120-mediated elongation dependent manner during the cell cycle S/G2 phase after formation of the initiating cartwheel structure. Required for the recruitment of centriolar proteins, such as POC1B, POC5 and CEP135, into the distal portion of centrioles. Also required for centriole-to-centrosome conversion during mitotic progression, but is dispensable for cartwheel removal or centriole disengagement. Binds to and stabilizes centriolar microtubule. May be involved in ciliogenesis. The sequence is that of Centrosomal protein of 295 kDa from Homo sapiens (Human).